Reading from the N-terminus, the 205-residue chain is Ribosomal RNA small subunit methyltransferase G (205 aa).

S-adenosyl-L-methionine-binding positions include glycine 70, leucine 75, 124-125 (IE), and arginine 138.

This sequence belongs to the methyltransferase superfamily. RNA methyltransferase RsmG family.

It localises to the cytoplasm. It catalyses the reaction guanosine(527) in 16S rRNA + S-adenosyl-L-methionine = N(7)-methylguanosine(527) in 16S rRNA + S-adenosyl-L-homocysteine. Its function is as follows. Specifically methylates the N7 position of guanine in position 527 of 16S rRNA. This Ruegeria sp. (strain TM1040) (Silicibacter sp.) protein is Ribosomal RNA small subunit methyltransferase G.